We begin with the raw amino-acid sequence, 563 residues long: Arginine--tRNA ligase (563 aa).

The 'HIGH' region signature appears at 121–131 (PNIAKPFSIGH).

The protein belongs to the class-I aminoacyl-tRNA synthetase family. Monomer.

It localises to the cytoplasm. It catalyses the reaction tRNA(Arg) + L-arginine + ATP = L-arginyl-tRNA(Arg) + AMP + diphosphate. This is Arginine--tRNA ligase from Streptococcus thermophilus (strain CNRZ 1066).